Reading from the N-terminus, the 85-residue chain is Putative sodium channel toxin Ts34 (85 aa).

Residues 1-17 (MNLPLLLLITILIEIHA) form the signal peptide. In terms of domain architecture, LCN-type CS-alpha/beta spans 19-82 (KDGYVIYKNS…IYGETGSYCW (64 aa)). Intrachain disulfides connect cysteine 30/cysteine 81, cysteine 34/cysteine 57, cysteine 43/cysteine 62, and cysteine 47/cysteine 64.

Belongs to the long (4 C-C) scorpion toxin superfamily. Sodium channel inhibitor family. As to expression, expressed by the venom gland.

The protein localises to the secreted. Functionally, putative sodium channel toxin. The protein is Putative sodium channel toxin Ts34 of Tityus serrulatus (Brazilian scorpion).